Here is a 398-residue protein sequence, read N- to C-terminus: Acetate kinase 1 (398 aa).

Asparagine 9 provides a ligand contact to Mg(2+). Residue lysine 16 coordinates ATP. Arginine 89 is a substrate binding site. Residue aspartate 146 is the Proton donor/acceptor of the active site. ATP is bound by residues 206–210 (HLGNG), 281–283 (DCR), and 329–333 (GIGEN). Glutamate 384 is a Mg(2+) binding site.

The protein belongs to the acetokinase family. As to quaternary structure, homodimer. The cofactor is Mg(2+). Mn(2+) serves as cofactor.

It localises to the cytoplasm. The catalysed reaction is acetate + ATP = acetyl phosphate + ADP. The protein operates within metabolic intermediate biosynthesis; acetyl-CoA biosynthesis; acetyl-CoA from acetate: step 1/2. Its function is as follows. Catalyzes the formation of acetyl phosphate from acetate and ATP. Can also catalyze the reverse reaction. This chain is Acetate kinase 1, found in Aliivibrio fischeri (strain ATCC 700601 / ES114) (Vibrio fischeri).